The following is a 259-amino-acid chain: MLIDWFTVSAQAINFLILVALLKRFLYGPVLRAMDRREERLASCFAEAENKRLEAQQLEENYRSLLQELEEARGVKLRQVEEEIEDQRHKLLAAARQEAAEIQSAWAASIRDERSSFFTELKKRVGSEMLNIARKSLGDLANIELEQLMVERFNERLAQLDRNEQQQVALAASERGVLVRSPFTLPPELRDRLTQGVRQALGEEIDMQYQDRADMPLGIELTVGGLKLSWGVDSYFEQLERDVATLYDAQAATVSEGSP.

Residues 5–27 form a helical membrane-spanning segment; that stretch reads WFTVSAQAINFLILVALLKRFLY.

It belongs to the ATPase B chain family. In terms of assembly, F-type ATPases have 2 components, F(1) - the catalytic core - and F(0) - the membrane proton channel. F(1) has five subunits: alpha(3), beta(3), gamma(1), delta(1), epsilon(1). F(0) has three main subunits: a(1), b(2) and c(10-14). The alpha and beta chains form an alternating ring which encloses part of the gamma chain. F(1) is attached to F(0) by a central stalk formed by the gamma and epsilon chains, while a peripheral stalk is formed by the delta and b chains.

The protein localises to the cell inner membrane. Functionally, f(1)F(0) ATP synthase produces ATP from ADP in the presence of a proton or sodium gradient. F-type ATPases consist of two structural domains, F(1) containing the extramembraneous catalytic core and F(0) containing the membrane proton channel, linked together by a central stalk and a peripheral stalk. During catalysis, ATP synthesis in the catalytic domain of F(1) is coupled via a rotary mechanism of the central stalk subunits to proton translocation. Its function is as follows. Component of the F(0) channel, it forms part of the peripheral stalk, linking F(1) to F(0). The protein is ATP synthase subunit b 2 of Syntrophotalea carbinolica (strain DSM 2380 / NBRC 103641 / GraBd1) (Pelobacter carbinolicus).